Consider the following 690-residue polypeptide: CREB-H transcription factor homolog let-607 (690 aa).

Disordered stretches follow at residues 87 to 118, 166 to 192, and 205 to 253; these read NDNC…SSGG, SAVH…SNGL, and PASI…KYPP. Composition is skewed to low complexity over residues 100 to 116, 170 to 181, and 213 to 236; these read SLPI…YHSS, QNQQQQQRRLNQ, and PSSS…SSST. Residues 284–347 enclose the bZIP domain; it reads DLKRIRRKIR…QSVISQLKKL (64 aa). Residues 286 to 321 form a basic motif region; the sequence is KRIRRKIRNKRSAQTSRKRKQDYIEQLEDRVSESTK. Positions 295 to 350 form a coiled coil; the sequence is KRSAQTSRKRKQDYIEQLEDRVSESTKENQALKQQIERLSSENQSVISQLKKLQAQ. Residues 326–333 form a leucine-zipper region; it reads LKQQIERL. A compositionally biased stretch (polar residues) spans 451-464; the sequence is HNNSKYPASGNQNH. Disordered stretches follow at residues 451–495 and 509–536; these read HNNS…SMYR and GARK…ATSP. Low complexity-rich tracts occupy residues 480 to 492 and 514 to 535; these read QPKQ…HQPS and SSTS…SATS.

This sequence belongs to the bZIP family.

The protein localises to the nucleus. In terms of biological role, probable transcription factor, required during migration of the gonadal distal tip cells (DTC). Probably regulates cell adhesion of DTCs via modulation of expression of genes involved in integrin-mediated adhesion, including tln-1, src-1, and integrin pat-2. Modulates expression of genes involved in protein trafficking during embryogenesis, including emo-1, sec-61, calu-1, sec-24.1, enpl-1, sar-1 and tfg-1. This is CREB-H transcription factor homolog let-607 from Caenorhabditis elegans.